Reading from the N-terminus, the 155-residue chain is Endoribonuclease YbeY (155 aa).

Residues H114, H118, and H124 each coordinate Zn(2+).

The protein belongs to the endoribonuclease YbeY family. Requires Zn(2+) as cofactor.

Its subcellular location is the cytoplasm. Functionally, single strand-specific metallo-endoribonuclease involved in late-stage 70S ribosome quality control and in maturation of the 3' terminus of the 16S rRNA. The sequence is that of Endoribonuclease YbeY from Escherichia coli O7:K1 (strain IAI39 / ExPEC).